We begin with the raw amino-acid sequence, 225 residues long: Peptidyl-tRNA hydrolase (225 aa).

Residue tyrosine 14 coordinates tRNA. Histidine 19 acts as the Proton acceptor in catalysis. Residues phenylalanine 64, asparagine 66, and asparagine 112 each coordinate tRNA. Residues 184–225 are disordered; the sequence is ALRMQPPKPEKPKPAAKAPEAQAPEAAPDERSALQKLADRFR. The span at 198–209 shows a compositional bias: low complexity; that stretch reads AAKAPEAQAPEA. Residues 211-225 show a composition bias toward basic and acidic residues; that stretch reads PDERSALQKLADRFR.

It belongs to the PTH family. In terms of assembly, monomer.

The protein localises to the cytoplasm. It catalyses the reaction an N-acyl-L-alpha-aminoacyl-tRNA + H2O = an N-acyl-L-amino acid + a tRNA + H(+). Hydrolyzes ribosome-free peptidyl-tRNAs (with 1 or more amino acids incorporated), which drop off the ribosome during protein synthesis, or as a result of ribosome stalling. Functionally, catalyzes the release of premature peptidyl moieties from peptidyl-tRNA molecules trapped in stalled 50S ribosomal subunits, and thus maintains levels of free tRNAs and 50S ribosomes. This chain is Peptidyl-tRNA hydrolase, found in Cereibacter sphaeroides (strain ATCC 17023 / DSM 158 / JCM 6121 / CCUG 31486 / LMG 2827 / NBRC 12203 / NCIMB 8253 / ATH 2.4.1.) (Rhodobacter sphaeroides).